Consider the following 110-residue polypeptide: Small ribosomal subunit protein bS18 (110 aa).

A compositionally biased stretch (low complexity) spans 1–18; the sequence is MSEATTTTTTTSAPRPGG. Residues 1–41 are disordered; it reads MSEATTTTTTTSAPRPGGRPSGPRPDRGPGGPRKKRPFQRR. Residues 32-41 show a composition bias toward basic residues; it reads PRKKRPFQRR.

The protein belongs to the bacterial ribosomal protein bS18 family. As to quaternary structure, part of the 30S ribosomal subunit. Forms a tight heterodimer with protein bS6.

In terms of biological role, binds as a heterodimer with protein bS6 to the central domain of the 16S rRNA, where it helps stabilize the platform of the 30S subunit. The chain is Small ribosomal subunit protein bS18 from Trichlorobacter lovleyi (strain ATCC BAA-1151 / DSM 17278 / SZ) (Geobacter lovleyi).